Here is a 71-residue protein sequence, read N- to C-terminus: Arrestin-D (71 aa).

The protein belongs to the arrestin family. Adrenal, cerebral cortex, heart, liver, lung, pituitary and testis.

This chain is Arrestin-D (Dar), found in Rattus norvegicus (Rat).